The chain runs to 580 residues: Probable mediator of RNA polymerase II transcription subunit 26a (580 aa).

In terms of domain architecture, TFIIS N-terminal spans 108 to 183 (DEVMRIRDIL…AEWKRLVDQW (76 aa)). Basic and acidic residues-rich tracts occupy residues 244–255 (RHSVESKHERKS), 280–290 (QTRREEADVRP), and 299–309 (VEPKRQTKQSR). Positions 244–337 (RHSVESKHER…RKLAGPQQDK (94 aa)) are disordered. Residues 347–368 (FEFAKRKLQESYHQHENAKRQR) are a coiled coil.

Belongs to the Mediator complex subunit 26 family. Component of the Mediator complex.

It is found in the nucleus. In terms of biological role, component of the Mediator complex, a coactivator involved in the regulated transcription of nearly all RNA polymerase II-dependent genes. Mediator functions as a bridge to convey information from gene-specific regulatory proteins to the basal RNA polymerase II transcription machinery. The Mediator complex, having a compact conformation in its free form, is recruited to promoters by direct interactions with regulatory proteins and serves for the assembly of a functional preinitiation complex with RNA polymerase II and the general transcription factors. May play a role in transcription elongation. The protein is Probable mediator of RNA polymerase II transcription subunit 26a (MED26A) of Arabidopsis thaliana (Mouse-ear cress).